A 306-amino-acid polypeptide reads, in one-letter code: Epoxyqueuosine reductase (306 aa).

Asp131 serves as the catalytic Proton donor. The 33-residue stretch at 173–205 folds into the 4Fe-4S ferredoxin-type domain; sequence LDLTYDHPVTDHCGTCTACIDACPTQAIVQPYV. [4Fe-4S] cluster is bound by residues Cys185, Cys188, Cys191, Cys195, Cys211, Cys238, Cys241, and Cys245.

The protein belongs to the QueG family. In terms of assembly, monomer. Requires cob(II)alamin as cofactor. [4Fe-4S] cluster is required as a cofactor.

The protein resides in the cytoplasm. It catalyses the reaction epoxyqueuosine(34) in tRNA + AH2 = queuosine(34) in tRNA + A + H2O. Its pathway is tRNA modification; tRNA-queuosine biosynthesis. Its function is as follows. Catalyzes the conversion of epoxyqueuosine (oQ) to queuosine (Q), which is a hypermodified base found in the wobble positions of tRNA(Asp), tRNA(Asn), tRNA(His) and tRNA(Tyr). This chain is Epoxyqueuosine reductase, found in Cellulophaga algicola (strain DSM 14237 / IC166 / ACAM 630).